Reading from the N-terminus, the 158-residue chain is Aspartate carbamoyltransferase regulatory chain (158 aa).

Positions 111, 116, 140, and 143 each coordinate Zn(2+).

It belongs to the PyrI family. In terms of assembly, contains catalytic and regulatory chains. Zn(2+) is required as a cofactor.

In terms of biological role, involved in allosteric regulation of aspartate carbamoyltransferase. The chain is Aspartate carbamoyltransferase regulatory chain from Metallosphaera sedula (strain ATCC 51363 / DSM 5348 / JCM 9185 / NBRC 15509 / TH2).